Here is a 566-residue protein sequence, read N- to C-terminus: CTP synthase (566 aa).

Residues Met1–Leu282 are amidoligase domain. Ser23 contacts CTP. Position 23 (Ser23) interacts with UTP. Residues Ser24–Leu29 and Asp81 contribute to the ATP site. Residues Asp81 and Glu156 each coordinate Mg(2+). Residues Asp163–Glu165, Lys203–Gln208, and Lys239 contribute to the CTP site. UTP-binding positions include Lys203–Gln208 and Lys239. The Glutamine amidotransferase type-1 domain occupies Thr308–Ala556. An L-glutamine-binding site is contributed by Gly371. Cys398 functions as the Nucleophile; for glutamine hydrolysis in the catalytic mechanism. L-glutamine-binding positions include Leu399 to Gln402, Glu422, and Arg482. Catalysis depends on residues His529 and Glu531.

The protein belongs to the CTP synthase family. Homotetramer.

It carries out the reaction UTP + L-glutamine + ATP + H2O = CTP + L-glutamate + ADP + phosphate + 2 H(+). The catalysed reaction is L-glutamine + H2O = L-glutamate + NH4(+). The enzyme catalyses UTP + NH4(+) + ATP = CTP + ADP + phosphate + 2 H(+). Its pathway is pyrimidine metabolism; CTP biosynthesis via de novo pathway; CTP from UDP: step 2/2. Its activity is regulated as follows. Allosterically activated by GTP, when glutamine is the substrate; GTP has no effect on the reaction when ammonia is the substrate. The allosteric effector GTP functions by stabilizing the protein conformation that binds the tetrahedral intermediate(s) formed during glutamine hydrolysis. Inhibited by the product CTP, via allosteric rather than competitive inhibition. Catalyzes the ATP-dependent amination of UTP to CTP with either L-glutamine or ammonia as the source of nitrogen. Regulates intracellular CTP levels through interactions with the four ribonucleotide triphosphates. This Leifsonia xyli subsp. xyli (strain CTCB07) protein is CTP synthase.